The primary structure comprises 63 residues: Beta-defensin 4 (63 aa).

Positions 1-22 are cleaved as a signal peptide; it reads MRIHYLLFTFLLVLLSPLAAFT. At Q23 the chain carries Pyrrolidone carboxylic acid. Disulfide bonds link C31-C59, C38-C52, and C42-C60.

The protein belongs to the beta-defensin family. As to expression, tongue, esophagus and trachea.

It localises to the secreted. Functionally, exhibits antimicrobial activity against Gram-negative bacteria and Gram-positive bacteria. May act as a ligand for C-C chemokine receptor CCR6. Can bind to mouse (but not human) CCR6 and induce chemotactic activity of CCR6-expressing cells. The protein is Beta-defensin 4 (Defb4) of Mus musculus (Mouse).